The chain runs to 152 residues: Ribonuclease H (152 aa).

Positions 1 to 142 constitute an RNase H type-1 domain; that stretch reads MKEVTIYTDG…CDELARAAIA (142 aa). 4 residues coordinate Mg(2+): aspartate 9, glutamate 47, aspartate 69, and aspartate 134.

It belongs to the RNase H family. In terms of assembly, monomer. Requires Mg(2+) as cofactor.

It localises to the cytoplasm. The catalysed reaction is Endonucleolytic cleavage to 5'-phosphomonoester.. Endonuclease that specifically degrades the RNA of RNA-DNA hybrids. The polypeptide is Ribonuclease H (Moorella thermoacetica (strain ATCC 39073 / JCM 9320)).